The primary structure comprises 418 residues: Serine hydroxymethyltransferase 2 (418 aa).

(6S)-5,6,7,8-tetrahydrofolate-binding positions include L121 and 125–127 (GHL). K230 is modified (N6-(pyridoxal phosphate)lysine). Residue 355–357 (SPF) coordinates (6S)-5,6,7,8-tetrahydrofolate.

Belongs to the SHMT family. As to quaternary structure, homodimer. The cofactor is pyridoxal 5'-phosphate.

It is found in the cytoplasm. It catalyses the reaction (6R)-5,10-methylene-5,6,7,8-tetrahydrofolate + glycine + H2O = (6S)-5,6,7,8-tetrahydrofolate + L-serine. Its pathway is one-carbon metabolism; tetrahydrofolate interconversion. The protein operates within amino-acid biosynthesis; glycine biosynthesis; glycine from L-serine: step 1/1. Catalyzes the reversible interconversion of serine and glycine with tetrahydrofolate (THF) serving as the one-carbon carrier. This reaction serves as the major source of one-carbon groups required for the biosynthesis of purines, thymidylate, methionine, and other important biomolecules. Also exhibits THF-independent aldolase activity toward beta-hydroxyamino acids, producing glycine and aldehydes, via a retro-aldol mechanism. In Pseudomonas aeruginosa (strain ATCC 15692 / DSM 22644 / CIP 104116 / JCM 14847 / LMG 12228 / 1C / PRS 101 / PAO1), this protein is Serine hydroxymethyltransferase 2.